The sequence spans 110 residues: Heat shock protein Hsp-12.2 (110 aa).

The region spanning 15-110 (DWPLQHNDGV…VLTITASKKA (96 aa)) is the sHSP domain.

This sequence belongs to the small heat shock protein (HSP20) family.

This Caenorhabditis elegans protein is Heat shock protein Hsp-12.2 (hsp-12.2).